We begin with the raw amino-acid sequence, 319 residues long: HTH-type transcriptional regulator YidZ (319 aa).

Residues 8-65 (LDLNLLLCLQLLMQERSVTKAAKRMNVTPSAVSKSLAKLRAWFDDPLFVNTPLGLAPT) form the HTH lysR-type domain. Residues 25-44 (VTKAAKRMNVTPSAVSKSLA) constitute a DNA-binding region (H-T-H motif).

This sequence belongs to the LysR transcriptional regulatory family.

Involved in anaerobic NO protection. The chain is HTH-type transcriptional regulator YidZ from Salmonella heidelberg (strain SL476).